The following is a 130-amino-acid chain: Small ribosomal subunit protein uS8 (130 aa).

This sequence belongs to the universal ribosomal protein uS8 family. As to quaternary structure, part of the 30S ribosomal subunit.

One of the primary rRNA binding proteins, it binds directly to 16S rRNA central domain where it helps coordinate assembly of the platform of the 30S subunit. The sequence is that of Small ribosomal subunit protein uS8 from Methanopyrus kandleri (strain AV19 / DSM 6324 / JCM 9639 / NBRC 100938).